The primary structure comprises 213 residues: 3-hexulose-6-phosphate synthase 2 (213 aa).

The protein belongs to the HPS/KGPDC family. HPS subfamily.

It carries out the reaction D-ribulose 5-phosphate + formaldehyde = D-arabino-hex-3-ulose 6-phosphate. The protein operates within one-carbon metabolism; formaldehyde assimilation via RuMP pathway; D-fructose 6-phosphate from D-ribulose 5-phosphate and formaldehyde: step 1/2. In terms of biological role, catalyzes the condensation of ribulose 5-phosphate with formaldehyde to form 3-hexulose 6-phosphate. The protein is 3-hexulose-6-phosphate synthase 2 of Staphylococcus saprophyticus subsp. saprophyticus (strain ATCC 15305 / DSM 20229 / NCIMB 8711 / NCTC 7292 / S-41).